The chain runs to 900 residues: Protein translocase subunit SecA (900 aa).

ATP contacts are provided by residues Q87, 105–109 (GEGKT), and D510. The disordered stretch occupies residues 857–890 (DSLDSLSDGGSDSADGQEYPKVGRNEPCPCGSGK). Positions 860-872 (DSLSDGGSDSADG) are enriched in low complexity. Residues C884, C886, C895, and H896 each contribute to the Zn(2+) site.

The protein belongs to the SecA family. Monomer and homodimer. Part of the essential Sec protein translocation apparatus which comprises SecA, SecYEG and auxiliary proteins SecDF-YajC and YidC. Requires Zn(2+) as cofactor.

It is found in the cell inner membrane. It localises to the cytoplasm. It catalyses the reaction ATP + H2O + cellular proteinSide 1 = ADP + phosphate + cellular proteinSide 2.. In terms of biological role, part of the Sec protein translocase complex. Interacts with the SecYEG preprotein conducting channel. Has a central role in coupling the hydrolysis of ATP to the transfer of proteins into and across the cell membrane, serving both as a receptor for the preprotein-SecB complex and as an ATP-driven molecular motor driving the stepwise translocation of polypeptide chains across the membrane. This chain is Protein translocase subunit SecA, found in Marinomonas sp. (strain MWYL1).